The following is a 285-amino-acid chain: sn-2 palmitoyl-lipid 9-desaturase (285 aa).

The next 2 membrane-spanning stretches (helical) occupy residues 20-40 and 44-64; these read WINVVFFGVFHALALLSPWFF and ALGLLVFLHWLFGSIGICLGY. Residues 65–70 carry the Histidine box-1 motif; it reads HRLLSH. Residues 81-101 traverse the membrane as a helical segment; that stretch reads YAIALIGALALQGGPIFWVGG. The Histidine box-2 motif lies at 102–106; it reads HRQHH. A helical transmembrane segment spans residues 169-189; the sequence is IPFALLLYVLGGWPFVFYGVF. Residues 239–243 carry the Histidine box-3 motif; sequence HHTYP.

It belongs to the fatty acid desaturase type 2 family. Fe(2+) is required as a cofactor.

The protein localises to the membrane. The catalysed reaction is a 1-acyl-2-hexadecanoyl-glycerolipid + 2 reduced [2Fe-2S]-[ferredoxin] + O2 + 2 H(+) = a 1-acyl-2-[(9Z)-hexadecenoyl]-glycerolipid + 2 oxidized [2Fe-2S]-[ferredoxin] + 2 H2O. It functions in the pathway lipid metabolism; fatty acid biosynthesis. Functionally, desaturase involved in fatty acid biosynthesis. Introduces a double bond at carbon 9 of palmitoyl groups (16:0) attached to the sn-2 position of the glycerol moiety of membrane glycerolipids. The protein is sn-2 palmitoyl-lipid 9-desaturase of Nostoc sp. (strain 36).